We begin with the raw amino-acid sequence, 478 residues long: V-type proton ATPase subunit H (478 aa).

The protein belongs to the V-ATPase H subunit family. As to quaternary structure, V-ATPase is a heteromultimeric enzyme composed of a peripheral catalytic V1 complex (components A to H) attached to an integral membrane V0 proton pore complex (components: a, c, c', c'', d, e, f and VOA1). Interacts with YND1.

Its subcellular location is the vacuole membrane. In terms of biological role, subunit of the V1 complex of vacuolar(H+)-ATPase (V-ATPase), a multisubunit enzyme composed of a peripheral complex (V1) that hydrolyzes ATP and a membrane integral complex (V0) that translocates protons. V-ATPase is responsible for acidifying and maintaining the pH of intracellular compartments. This subunit is essential for activity, but not assembly, of the enzyme complex. This subunit is also required for silencing the ATPase activity of V-ATPase when V1 is detached from V0. The polypeptide is V-type proton ATPase subunit H (Saccharomyces cerevisiae (strain ATCC 204508 / S288c) (Baker's yeast)).